Reading from the N-terminus, the 1898-residue chain is 1-phosphatidylinositol 4,5-bisphosphate phosphodiesterase epsilon-1 (1898 aa).

One can recognise a Ras-GEF domain in the interval 66 to 328 (FPEEVAFQLS…EREQKEKEAK (263 aa)). Disordered regions lie at residues 419-444 (QPLDSGRGAPSPMPSGRTPGTGGVGV) and 569-722 (TNTN…GPSG). Positions 569–583 (TNTNATRPNDSSLSS) are enriched in polar residues. Over residues 590 to 605 (SRLKNLKNAMQKKLRG) the composition is skewed to basic residues. Low complexity-rich tracts occupy residues 625-637 (PPSIKSQISSQSG), 666-687 (YTPRSRTPTSSSYGGRSVGGRS), and 701-716 (SGSISSSGQMSIQVSG). Residues 910–1058 (EDLRYPLSHY…MKNKILIKNK (149 aa)) form the PI-PLC X-box domain. Residues histidine 925 and histidine 970 contribute to the active site. Disordered stretches follow at residues 1082–1178 (QLNL…DRKT) and 1238–1274 (EEGPASASLSFSSRARTPSNLLNTPAPPRRQRSSTQL). A compositionally biased stretch (acidic residues) spans 1098–1123 (TVDEVEDDDLDEFLDDEENEEDDQEE). Over residues 1124 to 1144 (VQVRSEKEDSPKTSKRAEKSA) the composition is skewed to basic and acidic residues. A compositionally biased stretch (polar residues) spans 1146 to 1155 (NIKQQDSLCS). Composition is skewed to low complexity over residues 1163 to 1172 (KPSTSKTTSK) and 1242 to 1253 (ASASLSFSSRAR). Residues 1279 to 1385 (AAEFLGSVRA…CGYQLKPRCL (107 aa)) enclose the PI-PLC Y-box domain. The C2 domain occupies 1391–1517 (LLYNKFLPLS…PLRTPTNLPI (127 aa)). The region spanning 1570 to 1665 (QIFVLRITGA…RRFVLRKKGS (96 aa)) is the Ras-associating 1 domain. Residues 1680-1694 (GTSGSSTSVSPSPLT) are compositionally biased toward low complexity. The interval 1680–1711 (GTSGSSTSVSPSPLTKDGHVKSASSNQLHGRS) is disordered. One can recognise a Ras-associating 2 domain in the interval 1738–1857 (DTFLVCVHNV…GRFVLENRKD (120 aa)).

Interacts (via Ras-associating domain 1) with let-60 (in GTP-bound form). Requires Ca(2+) as cofactor. In terms of tissue distribution, expressed in the spermatheca, vulva, intestine and excretory cells. Expressed in sensory neurons AWC, AFD, ASE, ASG and BAG, interneurons, ventral nerve cord neurons and tail neurons. Expressed in body muscles.

It catalyses the reaction a 1,2-diacyl-sn-glycero-3-phospho-(1D-myo-inositol-4,5-bisphosphate) + H2O = 1D-myo-inositol 1,4,5-trisphosphate + a 1,2-diacyl-sn-glycerol + H(+). The production of the second messenger molecules diacylglycerol (DAG) and inositol 1,4,5-trisphosphate (IP3) is mediated by activated phosphatidylinositol-specific phospholipase C enzymes. plc-1 is a bifunctional enzyme which also regulates small GTPases of the Ras superfamily through its Ras guanine-exchange factor (RasGEF) activity. By activating IP3 receptor itr-1-mediated intracellular Ca(2+) release via the production of IP3, regulates ovulation by controlling contraction and/or dilation of the distal spermatheca valve during oocyte entry and the timing of the dilation of the spermatheca-uterine valve during oocyte exit. In a similar manner, plays an essential role in epidermal morphogenesis by regulating migration of epidermal cells during ventral closure and to a lesser extent by regulating epidermal cell dorsal intercalation. Involved in the immune response to S.aureus bacterium by activating kinase dkf-1 via the production of DAG which in turn activates transcription factor hlh-30. In ASER neurons, required for adjusting the orientation behavior in salt gradients based on the memory of previous salt concentration encountered. In Caenorhabditis elegans, this protein is 1-phosphatidylinositol 4,5-bisphosphate phosphodiesterase epsilon-1.